Consider the following 406-residue polypeptide: MTQLPYLLDRRGGALAAPATAWGDMMLNRALFSVALLSSVGSAWVVLSYACIKELRSYRHQLILGLAISDLLMSLNFMFSAGWNVAGGDLALEESRTACSVNGFLTQVFVVQTDWWILVIAIATYIILGNFKTQSQFIQTHVWIPWVGPWVLSIIIAAICHGVLGYGYIGGWCWLTSDLMRLLINFIPRWLIVIAIALIYIRLYMIVRKARKWDIEGVSPDPGDDMADTSVILMSVGKKDRERQGSGVLVSRDVSVSFGRKGSTAPTFVTMVTTSGAGDSREAISSCSAREEGSRARTVNVNSSRSLSLGMRQPLNAAQLKRIAKKMMVYPVAYAIIWACPTAIRIYQGTTGSRAPLWITIVDKSCIVIQGLVDAVVYGLNERAWQGWRDHIRRIIYKNEGGRIIG.

Topologically, residues 1–29 (MTQLPYLLDRRGGALAAPATAWGDMMLNR) are extracellular. A helical membrane pass occupies residues 30–50 (ALFSVALLSSVGSAWVVLSYA). The Cytoplasmic portion of the chain corresponds to 51–61 (CIKELRSYRHQ). The chain crosses the membrane as a helical span at residues 62-82 (LILGLAISDLLMSLNFMFSAG). At 83–107 (WNVAGGDLALEESRTACSVNGFLTQ) the chain is on the extracellular side. A disulfide bridge connects residues C99 and C173. The helical transmembrane segment at 108–128 (VFVVQTDWWILVIAIATYIIL) threads the bilayer. Over 129–143 (GNFKTQSQFIQTHVW) the chain is Cytoplasmic. Residues 144-164 (IPWVGPWVLSIIIAAICHGVL) form a helical membrane-spanning segment. Over 165–185 (GYGYIGGWCWLTSDLMRLLIN) the chain is Extracellular. The helical transmembrane segment at 186-206 (FIPRWLIVIAIALIYIRLYMI) threads the bilayer. Residues 207–326 (VRKARKWDIE…AAQLKRIAKK (120 aa)) lie on the Cytoplasmic side of the membrane. The helical transmembrane segment at 327 to 347 (MMVYPVAYAIIWACPTAIRIY) threads the bilayer. The Extracellular segment spans residues 348 to 356 (QGTTGSRAP). The helical transmembrane segment at 357–377 (LWITIVDKSCIVIQGLVDAVV) threads the bilayer. At 378 to 406 (YGLNERAWQGWRDHIRRIIYKNEGGRIIG) the chain is on the cytoplasmic side.

This sequence belongs to the G-protein coupled receptor 1 family. Interacts with ascaroside receptor GPR3; may form a functional heterodimer. Interacts with guanine nucleotide-binding protein alpha GPA2; to activate adenylate cyclase and positively regulate nematode trap formation.

Its subcellular location is the cell membrane. Functionally, g protein-coupled receptor that senses nematode ascaroside pheromones and signals via adenylate cyclase to positively regulate trap formation for nematode capture. The polypeptide is Ascaroside receptor GPR2 (Arthrobotrys oligospora (strain ATCC 24927 / CBS 115.81 / DSM 1491) (Nematode-trapping fungus)).